The sequence spans 244 residues: Heat stress transcription factor B-3 (244 aa).

A DNA-binding region spans residues 38 to 132; it reads PPPFLVKTYK…LMSNIRRRKS (95 aa). Residues 173 to 218 are hydrophobic repeat HR-A/B; that stretch reads TSSSFVYTALLDENKCLKNENELLSCELGKTKKKCKQLMELVERYR. Positions 202 to 208 match the Nuclear localization signal motif; sequence KTKKKCK. A disordered region spans residues 216–244; sequence RYRGEDEDATDESDDEEDEGLKLFGVKLE. Acidic residues predominate over residues 220 to 234; it reads EDEDATDESDDEEDE. The short motif at 236–243 is the Nuclear export signal element; it reads LKLFGVKL.

This sequence belongs to the HSF family. Class B subfamily. In terms of assembly, homotrimer. Post-translationally, exhibits temperature-dependent phosphorylation.

Its subcellular location is the cytoplasm. It localises to the nucleus. Transcriptional regulator that specifically binds DNA sequence 5'-AGAAnnTTCT-3' known as heat shock promoter elements (HSE). In Arabidopsis thaliana (Mouse-ear cress), this protein is Heat stress transcription factor B-3 (HSFB3).